Reading from the N-terminus, the 236-residue chain is uncharacterized protein (236 aa).

This is an uncharacterized protein from Saccharolobus islandicus (Sulfolobus islandicus).